Reading from the N-terminus, the 496-residue chain is Probable cytosol aminopeptidase (496 aa).

Residues K261 and D266 each contribute to the Mn(2+) site. K273 is a catalytic residue. Mn(2+) contacts are provided by D284, D343, and E345. R347 is a catalytic residue.

Belongs to the peptidase M17 family. Mn(2+) is required as a cofactor.

It localises to the cytoplasm. The catalysed reaction is Release of an N-terminal amino acid, Xaa-|-Yaa-, in which Xaa is preferably Leu, but may be other amino acids including Pro although not Arg or Lys, and Yaa may be Pro. Amino acid amides and methyl esters are also readily hydrolyzed, but rates on arylamides are exceedingly low.. It catalyses the reaction Release of an N-terminal amino acid, preferentially leucine, but not glutamic or aspartic acids.. Functionally, presumably involved in the processing and regular turnover of intracellular proteins. Catalyzes the removal of unsubstituted N-terminal amino acids from various peptides. This Bacillus pumilus (strain SAFR-032) protein is Probable cytosol aminopeptidase.